We begin with the raw amino-acid sequence, 603 residues long: NADH-ubiquinone oxidoreductase chain 5 (603 aa).

17 helical membrane passes run Tyr4–Ile24, Ser38–Asp58, Met87–Tyr107, Ile114–Ala134, Leu140–Ala160, Ala171–Leu191, Leu210–His230, Thr241–Ile261, Leu272–Ala292, Ile301–Gly320, Ala325–Ile347, Ser370–Tyr390, Trp407–Leu429, Leu457–Val477, Ile482–Leu502, Ile537–Trp557, and Gly582–Ile602.

Belongs to the complex I subunit 5 family. As to quaternary structure, core subunit of respiratory chain NADH dehydrogenase (Complex I) which is composed of 45 different subunits.

The protein localises to the mitochondrion inner membrane. It catalyses the reaction a ubiquinone + NADH + 5 H(+)(in) = a ubiquinol + NAD(+) + 4 H(+)(out). Core subunit of the mitochondrial membrane respiratory chain NADH dehydrogenase (Complex I) which catalyzes electron transfer from NADH through the respiratory chain, using ubiquinone as an electron acceptor. Essential for the catalytic activity and assembly of complex I. The protein is NADH-ubiquinone oxidoreductase chain 5 (MT-ND5) of Gorilla gorilla gorilla (Western lowland gorilla).